Consider the following 279-residue polypeptide: Large ribosomal subunit protein uL2 (279 aa).

2 disordered regions span residues 32–53 (SLLR…TTRH) and 225–279 (AMNP…KKRK). Positions 253-268 (KEGRTRHINKPSDKLI) are enriched in basic and acidic residues. The span at 269-279 (VRRRNAGKKRK) shows a compositional bias: basic residues.

The protein belongs to the universal ribosomal protein uL2 family. Part of the 50S ribosomal subunit. Forms a bridge to the 30S subunit in the 70S ribosome.

One of the primary rRNA binding proteins. Required for association of the 30S and 50S subunits to form the 70S ribosome, for tRNA binding and peptide bond formation. It has been suggested to have peptidyltransferase activity; this is somewhat controversial. Makes several contacts with the 16S rRNA in the 70S ribosome. The polypeptide is Large ribosomal subunit protein uL2 (Clavibacter michiganensis subsp. michiganensis (strain NCPPB 382)).